A 522-amino-acid chain; its full sequence is U4/U6 small nuclear ribonucleoprotein Prp4 (522 aa).

The span at 1–13 shows a compositional bias: polar residues; it reads MASSRASSTQATK. Residues 1–20 are disordered; the sequence is MASSRASSTQATKTKAPDDL. Lys-27 is subject to N6-acetyllysine. WD repeat units lie at residues 229-268, 271-318, 321-360, 363-402, 405-444, 447-487, and 490-521; these read GDDR…LLHT, GHNT…PVAD, GHTV…EILH, GHSM…CIMF, GHLK…CVYT, AHQN…PLKT, and GHEG…LWMA.

As to quaternary structure, component of the precatalytic spliceosome (spliceosome B complex). Component of the U4/U6-U5 tri-snRNP complex, a building block of the precatalytic spliceosome (spliceosome B complex). The U4/U6-U5 tri-snRNP complex is composed of the U4, U6 and U5 snRNAs and at least PRPF3, PRPF4, PRPF6, PRPF8, PRPF31, SNRNP200, TXNL4A, SNRNP40, SNRPB, SNRPD1, SNRPD2, SNRPD3, SNRPE, SNRPF, SNRPG, DDX23, CD2BP2, PPIH, SNU13, EFTUD2, SART1 and USP39, plus LSM2, LSM3, LSM4, LSM5, LSM6, LSM7 and LSM8. Interacts directly with PRPF18, PPIH and PRPF3. Part of a heteromeric complex containing PPIH, PRPF3 and PRPF4 that is stable in the absence of RNA. Interacts with ERCC6.

The protein resides in the nucleus. Its subcellular location is the nucleus speckle. Its function is as follows. Plays a role in pre-mRNA splicing as component of the U4/U6-U5 tri-snRNP complex that is involved in spliceosome assembly, and as component of the precatalytic spliceosome (spliceosome B complex). In Homo sapiens (Human), this protein is U4/U6 small nuclear ribonucleoprotein Prp4 (PRPF4).